The following is a 376-amino-acid chain: HLVESKGGAIACMFLALFFLGTWPALLTMLERRGRLPQHTYLDYSITNFFAALLIAFTFGEIGKGKPDEPNFLAQLAQDNWPSVLFAMGGGVVLSLGNLSSQYAFAFVGLSVTEVITASITVVIGTTLNYFLDDKINKAEILFPGVGCFLIAVFLGFCRFNSSNASDNKAKLSNYTSDYKEVAISSKESDLVKSKDLERGSSSADNVEAGTAVFLLELEERRAIKVFGKSTLIGLALTFSAGLCFSMFSPAFNLATNDQWHTLPNGIPHLTVYTAFFYFSISCFVIAIILNITFLYHPVLNLPKSSLKAYLADSDGRIWALLAGLLCGFGNSLQFMGGQAAGYQQQSLCRHFLCKHFWGVLLFGEYRRSSRKTYIC.

Topologically, residues 1–9 (HLVESKGGA) are extracellular. Residues 10-30 (IACMFLALFFLGTWPALLTML) form a helical membrane-spanning segment. Topologically, residues 31–41 (ERRGRLPQHTY) are cytoplasmic. A helical transmembrane segment spans residues 42–62 (LDYSITNFFAALLIAFTFGEI). At 63 to 80 (GKGKPDEPNFLAQLAQDN) the chain is on the extracellular side. A helical membrane pass occupies residues 81–101 (WPSVLFAMGGGVVLSLGNLSS). The Cytoplasmic segment spans residues 102 to 103 (QY). Residues 104–124 (AFAFVGLSVTEVITASITVVI) form a helical membrane-spanning segment. Residues 125 to 137 (GTTLNYFLDDKIN) lie on the Extracellular side of the membrane. Residues 138–158 (KAEILFPGVGCFLIAVFLGFC) form a helical membrane-spanning segment. At 159 to 231 (RFNSSNASDN…RAIKVFGKST (73 aa)) the chain is on the cytoplasmic side. ATP is bound at residue 223–230 (AIKVFGKS). Residues 232–252 (LIGLALTFSAGLCFSMFSPAF) traverse the membrane as a helical segment. At 253–274 (NLATNDQWHTLPNGIPHLTVYT) the chain is on the extracellular side. A helical transmembrane segment spans residues 275-295 (AFFYFSISCFVIAIILNITFL). The Cytoplasmic portion of the chain corresponds to 296 to 317 (YHPVLNLPKSSLKAYLADSDGR). Residues 318 to 338 (IWALLAGLLCGFGNSLQFMGG) traverse the membrane as a helical segment. Over 339–376 (QAAGYQQQSLCRHFLCKHFWGVLLFGEYRRSSRKTYIC) the chain is Extracellular.

The protein belongs to the plant ureide permease (TC 2.A.7.19) family.

It is found in the membrane. Its function is as follows. Transports a wide spectrum of oxo derivatives of heterocyclic nitrogen compounds. The chain is Probable ureide permease A3 (A3) from Vigna unguiculata (Cowpea).